A 468-amino-acid chain; its full sequence is 6-phospho-beta-galactosidase (468 aa).

Positions 19, 116, 159, 160, and 297 each coordinate D-galactose 6-phosphate. Glu160 acts as the Proton donor in catalysis. The active-site Nucleophile is Glu375. Ser428, Trp429, Lys435, and Tyr437 together coordinate D-galactose 6-phosphate.

This sequence belongs to the glycosyl hydrolase 1 family.

The catalysed reaction is a 6-phospho-beta-D-galactoside + H2O = D-galactose 6-phosphate + an alcohol. It functions in the pathway carbohydrate metabolism; lactose degradation; D-galactose 6-phosphate and beta-D-glucose from lactose 6-phosphate: step 1/1. In Streptococcus pyogenes serotype M12 (strain MGAS2096), this protein is 6-phospho-beta-galactosidase.